A 469-amino-acid polypeptide reads, in one-letter code: 1-aminocyclopropane-1-carboxylate synthase 3 (469 aa).

The residue at position 272 (Lys-272) is an N6-(pyridoxal phosphate)lysine. The interval Ala-432–Ser-452 is disordered. The segment covering Asn-437 to Asn-447 has biased composition (low complexity).

The protein belongs to the class-I pyridoxal-phosphate-dependent aminotransferase family. In terms of assembly, homodimer. Pyridoxal 5'-phosphate serves as cofactor.

It catalyses the reaction S-adenosyl-L-methionine = 1-aminocyclopropane-1-carboxylate + S-methyl-5'-thioadenosine + H(+). The protein operates within alkene biosynthesis; ethylene biosynthesis via S-adenosyl-L-methionine; ethylene from S-adenosyl-L-methionine: step 1/2. Functionally, catalyzes the formation of 1-aminocyclopropane-1-carboxylate, a direct precursor of ethylene in higher plants. This chain is 1-aminocyclopropane-1-carboxylate synthase 3 (ACS3), found in Solanum lycopersicum (Tomato).